The sequence spans 431 residues: Adenylosuccinate synthetase (431 aa).

GTP-binding positions include 12-18 (GDEGKGK) and 40-42 (GHT). Catalysis depends on aspartate 13, which acts as the Proton acceptor. Aspartate 13 and glycine 40 together coordinate Mg(2+). IMP contacts are provided by residues 13–16 (DEGK), 38–41 (NAGH), threonine 128, arginine 142, glutamine 223, threonine 238, and arginine 301. Histidine 41 functions as the Proton donor in the catalytic mechanism. Residue 297-303 (TVTGRPR) participates in substrate binding. Residues arginine 303, 329 to 331 (SID), and 411 to 413 (SVG) contribute to the GTP site.

It belongs to the adenylosuccinate synthetase family. In terms of assembly, homodimer. Mg(2+) is required as a cofactor.

Its subcellular location is the cytoplasm. It carries out the reaction IMP + L-aspartate + GTP = N(6)-(1,2-dicarboxyethyl)-AMP + GDP + phosphate + 2 H(+). It functions in the pathway purine metabolism; AMP biosynthesis via de novo pathway; AMP from IMP: step 1/2. Its function is as follows. Plays an important role in the de novo pathway of purine nucleotide biosynthesis. Catalyzes the first committed step in the biosynthesis of AMP from IMP. The sequence is that of Adenylosuccinate synthetase from Lacticaseibacillus paracasei (strain ATCC 334 / BCRC 17002 / CCUG 31169 / CIP 107868 / KCTC 3260 / NRRL B-441) (Lactobacillus paracasei).